The following is a 436-amino-acid chain: Eukaryotic peptide chain release factor subunit 1-1 (436 aa).

Belongs to the eukaryotic release factor 1 family. In terms of assembly, heterodimer of two subunits, one of which binds GTP.

It is found in the cytoplasm. In terms of biological role, directs the termination of nascent peptide synthesis (translation) in response to the termination codons UAA, UAG and UGA. Modulates plant growth and development. In Arabidopsis thaliana (Mouse-ear cress), this protein is Eukaryotic peptide chain release factor subunit 1-1 (ERF1-1).